We begin with the raw amino-acid sequence, 260 residues long: MLAKRIIPCLDVDNGRVVKGVQFVDIKDAGDPVEVAKRYNEQGADEITFLDITATNDERDTTYHTVERMAETVFVPLTVGGGVRKIADIRNLLNAGADKVAINSAAVFTPEFVGEASQKFGNQCIVVAIDAKRVADIEVDGIIMPRWEIFTHGGRKPTGIDAVAWASKMAELGAGELLVTSMDGDGTKKGYDLALMKQITSRVNVPVIASGGVGNLQHLAEGVLEGGVDAVLAASIFHFGEYTVQEAKAYMAAQGIQMRL.

Catalysis depends on residues Asp11 and Asp130.

This sequence belongs to the HisA/HisF family. As to quaternary structure, heterodimer of HisH and HisF.

The protein resides in the cytoplasm. It carries out the reaction 5-[(5-phospho-1-deoxy-D-ribulos-1-ylimino)methylamino]-1-(5-phospho-beta-D-ribosyl)imidazole-4-carboxamide + L-glutamine = D-erythro-1-(imidazol-4-yl)glycerol 3-phosphate + 5-amino-1-(5-phospho-beta-D-ribosyl)imidazole-4-carboxamide + L-glutamate + H(+). Its pathway is amino-acid biosynthesis; L-histidine biosynthesis; L-histidine from 5-phospho-alpha-D-ribose 1-diphosphate: step 5/9. In terms of biological role, IGPS catalyzes the conversion of PRFAR and glutamine to IGP, AICAR and glutamate. The HisF subunit catalyzes the cyclization activity that produces IGP and AICAR from PRFAR using the ammonia provided by the HisH subunit. This is Imidazole glycerol phosphate synthase subunit HisF from Psychrobacter cryohalolentis (strain ATCC BAA-1226 / DSM 17306 / VKM B-2378 / K5).